The sequence spans 406 residues: S-adenosylmethionine synthase (406 aa).

His-5 contributes to the ATP binding site. Asp-7 lines the Mg(2+) pocket. Glu-33 is a binding site for K(+). L-methionine is bound by residues Glu-46 and Gln-89. The flexible loop stretch occupies residues 89-99; the sequence is QSPDIAQGVDT. Residues 164–166, 240–241, Asp-249, 255–256, Ala-272, and Lys-276 each bind ATP; these read DGK, KF, and RK. Asp-249 is an L-methionine binding site. An L-methionine-binding site is contributed by Lys-280.

The protein belongs to the AdoMet synthase family. In terms of assembly, homotetramer; dimer of dimers. Requires Mg(2+) as cofactor. It depends on K(+) as a cofactor.

The protein resides in the cytoplasm. It catalyses the reaction L-methionine + ATP + H2O = S-adenosyl-L-methionine + phosphate + diphosphate. It functions in the pathway amino-acid biosynthesis; S-adenosyl-L-methionine biosynthesis; S-adenosyl-L-methionine from L-methionine: step 1/1. Its function is as follows. Catalyzes the formation of S-adenosylmethionine (AdoMet) from methionine and ATP. The overall synthetic reaction is composed of two sequential steps, AdoMet formation and the subsequent tripolyphosphate hydrolysis which occurs prior to release of AdoMet from the enzyme. This chain is S-adenosylmethionine synthase, found in Synechococcus sp. (strain ATCC 27144 / PCC 6301 / SAUG 1402/1) (Anacystis nidulans).